A 422-amino-acid polypeptide reads, in one-letter code: Glutamyl-tRNA reductase (422 aa).

Residues 49–52 (TCNR), S108, 113–115 (EPQ), and Q119 contribute to the substrate site. The Nucleophile role is filled by C50. Residue 188-193 (GAGQTI) participates in NADP(+) binding.

The protein belongs to the glutamyl-tRNA reductase family. As to quaternary structure, homodimer.

The enzyme catalyses (S)-4-amino-5-oxopentanoate + tRNA(Glu) + NADP(+) = L-glutamyl-tRNA(Glu) + NADPH + H(+). It participates in porphyrin-containing compound metabolism; protoporphyrin-IX biosynthesis; 5-aminolevulinate from L-glutamyl-tRNA(Glu): step 1/2. Catalyzes the NADPH-dependent reduction of glutamyl-tRNA(Glu) to glutamate 1-semialdehyde (GSA). This chain is Glutamyl-tRNA reductase, found in Marinomonas sp. (strain MWYL1).